The sequence spans 901 residues: HTH-type transcriptional regulator MalT (901 aa).

39–46 (SPAGYGKT) contributes to the ATP binding site. One can recognise an HTH luxR-type domain in the interval 829–894 (ELIRTSPLTQ…AAVQHAQKLL (66 aa)). A DNA-binding region (H-T-H motif) is located at residues 853–872 (NEQIAGELEVAATTIKTHIR).

This sequence belongs to the MalT family. As to quaternary structure, monomer in solution. Oligomerizes to an active state in the presence of the positive effectors ATP and maltotriose.

Its activity is regulated as follows. Activated by ATP and maltotriose, which are both required for DNA binding. Functionally, positively regulates the transcription of the maltose regulon whose gene products are responsible for uptake and catabolism of malto-oligosaccharides. Specifically binds to the promoter region of its target genes, recognizing a short DNA motif called the MalT box. This is HTH-type transcriptional regulator MalT from Escherichia coli (strain 55989 / EAEC).